The sequence spans 363 residues: Aminomethyltransferase (363 aa).

This sequence belongs to the GcvT family. In terms of assembly, the glycine cleavage system is composed of four proteins: P, T, L and H.

The enzyme catalyses N(6)-[(R)-S(8)-aminomethyldihydrolipoyl]-L-lysyl-[protein] + (6S)-5,6,7,8-tetrahydrofolate = N(6)-[(R)-dihydrolipoyl]-L-lysyl-[protein] + (6R)-5,10-methylene-5,6,7,8-tetrahydrofolate + NH4(+). Its function is as follows. The glycine cleavage system catalyzes the degradation of glycine. In Staphylococcus aureus (strain N315), this protein is Aminomethyltransferase.